Consider the following 259-residue polypeptide: MAPVKRRVFKTNNEMAVELAKYTADLSSKFCKERGVFTVVLSGGDLIAWLWKLLEAPYIDSIEWSKWHIFWVDERVCAWDHADSNYKLAYDGFLSKVPVPAENIYAIDNGLGAEGNAELAAERYEECLKQKVNQNIIRTYKSSGFPQFDLQLLGMGPDGHMASLFPGHAQINEKVKWVTSITDSPKPPSKRITLTLPVINCASYNVMAVCDKEQADSVAAALNHTKDLPAGRLTADVEVVWFLDQAAASKLPHGWCSIL.

The protein belongs to the glucosamine/galactosamine-6-phosphate isomerase family. 6-phosphogluconolactonase subfamily.

The protein localises to the cytoplasm. The protein resides in the cytosol. The catalysed reaction is 6-phospho-D-glucono-1,5-lactone + H2O = 6-phospho-D-gluconate + H(+). It functions in the pathway carbohydrate degradation; pentose phosphate pathway; D-ribulose 5-phosphate from D-glucose 6-phosphate (oxidative stage): step 2/3. Its function is as follows. Catalyzes the hydrolysis of 6-phosphogluconolactone to 6-phosphogluconate. The polypeptide is Probable 6-phosphogluconolactonase 2 (Arabidopsis thaliana (Mouse-ear cress)).